Reading from the N-terminus, the 447-residue chain is Ribosomal protein uS12 methylthiotransferase RimO (447 aa).

The 111-residue stretch at proline 4 to proline 114 folds into the MTTase N-terminal domain. 6 residues coordinate [4Fe-4S] cluster: cysteine 13, cysteine 49, cysteine 78, cysteine 147, cysteine 151, and cysteine 154. The 238-residue stretch at leucine 133–alanine 370 folds into the Radical SAM core domain. Residues glutamine 373–glutamine 443 enclose the TRAM domain.

It belongs to the methylthiotransferase family. RimO subfamily. [4Fe-4S] cluster serves as cofactor.

It is found in the cytoplasm. The catalysed reaction is L-aspartate(89)-[ribosomal protein uS12]-hydrogen + (sulfur carrier)-SH + AH2 + 2 S-adenosyl-L-methionine = 3-methylsulfanyl-L-aspartate(89)-[ribosomal protein uS12]-hydrogen + (sulfur carrier)-H + 5'-deoxyadenosine + L-methionine + A + S-adenosyl-L-homocysteine + 2 H(+). Functionally, catalyzes the methylthiolation of an aspartic acid residue of ribosomal protein uS12. The sequence is that of Ribosomal protein uS12 methylthiotransferase RimO from Acinetobacter baylyi (strain ATCC 33305 / BD413 / ADP1).